The following is a 453-amino-acid chain: Protein FAM117A (453 aa).

Positions 1-25 (MAGAAAGGRGGGAWGPGRGGAGGLR) are enriched in gly residues. The tract at residues 1 to 45 (MAGAAAGGRGGGAWGPGRGGAGGLRRGCSPPAPAGSPRAGLQPLR) is disordered. Phosphoserine is present on residues Ser-29 and Ser-67. Residues 149 to 175 (TDHRKEISKLKQQLQRTKLSRSGKEKE) are a coiled coil. The disordered stretch occupies residues 159-201 (KQQLQRTKLSRSGKEKERGSPLLGDHAVRGALRASPPSFPSGS). Residues Ser-178, Ser-193, Ser-201, and Ser-213 each carry the phosphoserine modification. Positions 269 to 278 (SSPSMSLASP) are enriched in low complexity. The interval 269-320 (SSPSMSLASPQPCGLASHEEHRGAAEELASTPNDKASSPGHPAFLEDGSPSP) is disordered. Thr-299 is modified (phosphothreonine). Ser-319 and Ser-327 each carry phosphoserine. Thr-354 carries the phosphothreonine modification. A compositionally biased stretch (pro residues) spans 406–416 (GSPLPPASPRP). The interval 406-453 (GSPLPPASPRPPPRKDPEASKASPLPFEPWQRTPPSEEPVLFQSSLMV) is disordered. Phosphoserine occurs at positions 413 and 428.

It belongs to the FAM117 family.

The protein is Protein FAM117A (FAM117A) of Homo sapiens (Human).